The chain runs to 175 residues: Interferon gamma (175 aa).

A signal peptide spans 1 to 23; the sequence is MNATCCILALLLCLTQAISGCYC. Q24 is modified (pyrrolidone carboxylic acid). N-linked (GlcNAc...) asparagine glycosylation is found at N39 and N106.

It belongs to the type II (or gamma) interferon family. Homodimer. Interacts with IFNGR1 (via extracellular domain); this interaction promotes IFNGR1 dimerization. Released primarily from activated T lymphocytes.

Its subcellular location is the secreted. In terms of biological role, type II interferon produced by immune cells such as T-cells and NK cells that plays crucial roles in antimicrobial, antiviral, and antitumor responses by activating effector immune cells and enhancing antigen presentation. Primarily signals through the JAK-STAT pathway after interaction with its receptor IFNGR1 to affect gene regulation. Upon IFNG binding, IFNGR1 intracellular domain opens out to allow association of downstream signaling components JAK2, JAK1 and STAT1, leading to STAT1 activation, nuclear translocation and transcription of IFNG-regulated genes. Many of the induced genes are transcription factors such as IRF1 that are able to further drive regulation of a next wave of transcription. Plays a role in class I antigen presentation pathway by inducing a replacement of catalytic proteasome subunits with immunoproteasome subunits. In turn, increases the quantity, quality, and repertoire of peptides for class I MHC loading. Increases the efficiency of peptide generation also by inducing the expression of activator PA28 that associates with the proteasome and alters its proteolytic cleavage preference. Up-regulates as well MHC II complexes on the cell surface by promoting expression of several key molecules such as cathepsins B/CTSB, H/CTSH, and L/CTSL. Participates in the regulation of hematopoietic stem cells during development and under homeostatic conditions by affecting their development, quiescence, and differentiation. This is Interferon gamma (IFNG) from Peromyscus maniculatus (North American deer mouse).